The following is a 562-amino-acid chain: Probable malate:quinone oxidoreductase (562 aa).

The protein belongs to the MQO family. FAD serves as cofactor.

It carries out the reaction (S)-malate + a quinone = a quinol + oxaloacetate. The protein operates within carbohydrate metabolism; tricarboxylic acid cycle; oxaloacetate from (S)-malate (quinone route): step 1/1. This Stenotrophomonas maltophilia (strain K279a) protein is Probable malate:quinone oxidoreductase.